Here is a 643-residue protein sequence, read N- to C-terminus: UvrABC system protein C (643 aa).

The region spanning 25 to 104 (AEPGVYFMRD…IKQHQPHFNV (80 aa)) is the GIY-YIG domain. Residues 214-249 (SELVELLEAQMLQAAENLEFEKAAKIRDQIRGLEGL) form the UVR domain.

Belongs to the UvrC family. In terms of assembly, interacts with UvrB in an incision complex.

It localises to the cytoplasm. Functionally, the UvrABC repair system catalyzes the recognition and processing of DNA lesions. UvrC both incises the 5' and 3' sides of the lesion. The N-terminal half is responsible for the 3' incision and the C-terminal half is responsible for the 5' incision. The protein is UvrABC system protein C of Synechococcus elongatus (strain ATCC 33912 / PCC 7942 / FACHB-805) (Anacystis nidulans R2).